The primary structure comprises 314 residues: Olfactory receptor 10A3 (314 aa).

Over 1–25 (MKRQNQSCVVEFILLGFSNFPELQV) the chain is Extracellular. A glycan (N-linked (GlcNAc...) asparagine) is linked at Asn5. A helical transmembrane segment spans residues 26 to 46 (QLFGVFLVIYVVTLMGNAIIT). Over 47–54 (VIISLNQS) the chain is Cytoplasmic. The helical transmembrane segment at 55–75 (LHVPMYLFLLNLSVVEVSFSA) threads the bilayer. The Extracellular portion of the chain corresponds to 76–99 (VITPEMLVVLSTEKTMISFVGCFA). A disulfide bond links Cys97 and Cys189. The helical transmembrane segment at 100-120 (QMYFILLFGGTECFLLGAMAY) threads the bilayer. Over 121–139 (DRFAAICHPLNYPVIMNRG) the chain is Cytoplasmic. Residues 140–160 (VFMKLVIFSWISGIMVATVQT) form a helical membrane-spanning segment. Over 161–197 (TWVFSFPFCGPNEINHLFCETPPVLELVCADTFLFEI) the chain is Extracellular. A helical membrane pass occupies residues 198–217 (YAFTGTILIVMVPFLLILLS). Residues 218 to 237 (YIRVLFAILKMPSTTGRQKA) lie on the Cytoplasmic side of the membrane. Residues 238–258 (FSTCASHLTSVTLFYGTANMT) traverse the membrane as a helical segment. The Extracellular segment spans residues 259–271 (YLQPKSGYSPETK). Residues 272–292 (KLISLAYTLLTPLLNPLIYSL) form a helical membrane-spanning segment. Residues 293–314 (RNSEMKRTLIKLWRRKVILHTF) are Cytoplasmic-facing.

The protein belongs to the G-protein coupled receptor 1 family.

It localises to the cell membrane. Odorant receptor. In Homo sapiens (Human), this protein is Olfactory receptor 10A3 (OR10A3).